A 320-amino-acid chain; its full sequence is Cytochrome f (320 aa).

Residues 1–35 (MQTKNTFSWIKKEIIRSISVSLMIYIIARTSISNA) form the signal peptide. Tyr36, Cys56, Cys59, and His60 together coordinate heme. The helical transmembrane segment at 286–306 (VQGLLFFLASVILAQIFLVLK) threads the bilayer.

Belongs to the cytochrome f family. As to quaternary structure, the 4 large subunits of the cytochrome b6-f complex are cytochrome b6, subunit IV (17 kDa polypeptide, petD), cytochrome f and the Rieske protein, while the 4 small subunits are PetG, PetL, PetM and PetN. The complex functions as a dimer. Requires heme as cofactor.

It localises to the plastid. Its subcellular location is the chloroplast thylakoid membrane. Its function is as follows. Component of the cytochrome b6-f complex, which mediates electron transfer between photosystem II (PSII) and photosystem I (PSI), cyclic electron flow around PSI, and state transitions. The chain is Cytochrome f from Eucalyptus globulus subsp. globulus (Tasmanian blue gum).